The chain runs to 352 residues: Ion-translocating oxidoreductase complex subunit D (352 aa).

4 helical membrane passes run 20–40, 42–62, 89–109, and 123–143; these read IMLL…WFFG, GTLV…ALVL, IPPL…VIIA, and PAMI…TSWL. T187 carries the FMN phosphoryl threonine modification. A run of 5 helical transmembrane segments spans residues 214–234, 242–262, 267–287, 301–321, and 322–342; these read ILAG…GLWL, WHIP…GWLF, LAAP…FFIL, LIFG…GGYP, and DGVA…DYYT.

Belongs to the NqrB/RnfD family. In terms of assembly, the complex is composed of six subunits: RsxA, RsxB, RsxC, RsxD, RsxE and RsxG. Requires FMN as cofactor.

The protein localises to the cell inner membrane. Functionally, part of a membrane-bound complex that couples electron transfer with translocation of ions across the membrane. Required to maintain the reduced state of SoxR. This is Ion-translocating oxidoreductase complex subunit D from Shigella sonnei (strain Ss046).